The chain runs to 540 residues: MKLLAVRRLFRIQRVVIRYRLDDLLFDQPLLPWWLASLRLLMPWRWLPRKPTELSRGARLRLALQDLGPIFIKFGQLLSTRRDLLPPDIADELMLLQDRVPPFDPKKAVALIEEQLGAKVGEVFSRFDVEPLASASVAQVHAARLKTGEEVVVKVVRPGLKPVIAQDLAWLFLIAKAAERASADARRLHPVEIVGDYEKTIYDELDLLREAANASQLRRNFEDSELMYVPQVYWDLCRPKVLVMERIYGVPVTDMATLADQRTDMKLLAERGVEVFFTQVFRDSFFHADMHPGNIFVSTVKPWSPQYIAIDCGIVGSLTAEDQDYLARNLFAFFKRDYRRVAQLHIDSGWVPANTKVNEFEAAIRTVCEPIFEKPLKDISFGQVLMRLFQTARRFNMEVQPQLVLLQKTLLNIEGLGRQLYPDLDLWSTAKPYLERWMRDRYSPKAVFGNLHSQVEQLPHLAGMTRDLLERLSQPHLHDPQLPERRRQGDRWALRLLGAGLLGGGAVLAAGAAETASLAAPAAWPAWLMLAAGLYLIVRQ.

A helical transmembrane segment spans residues 24-44 (LLFDQPLLPWWLASLRLLMPW). Residues 126 to 494 (RFDVEPLASA…RRRQGDRWAL (369 aa)) form the Protein kinase domain. ATP-binding positions include 132 to 140 (LASASVAQV) and K154. D289 acts as the Proton acceptor in catalysis. The next 2 helical transmembrane spans lie at 496-516 (LLGA…AETA) and 518-538 (LAAP…YLIV).

It belongs to the ABC1 family. UbiB subfamily.

The protein resides in the cell inner membrane. It participates in cofactor biosynthesis; ubiquinone biosynthesis [regulation]. In terms of biological role, is probably a protein kinase regulator of UbiI activity which is involved in aerobic coenzyme Q (ubiquinone) biosynthesis. This chain is Probable protein kinase UbiB, found in Pseudomonas putida (strain ATCC 700007 / DSM 6899 / JCM 31910 / BCRC 17059 / LMG 24140 / F1).